The primary structure comprises 407 residues: MLDPLDILTNIDDVLPYYQAIFSAEEQKVVGYEVLGRILADSEIQSLGPFFLDAGIPEEYKLEVDNRIIRQALDRFLEADSDLLIFMNQDANLLMLDHGESFLELLKEYEAKGIELHRFVLEITEHNFEGDIEQLYHMLAYYRTYGIKIAVDNIGKESSNLDRIALLSPDLLKIDLQALKVSQPSPSYEHVLYSISLLARKIGAALLYEDIEANFQLQYAWRNGGRYFQGYYLVSPSETFLERDVLKQRLKTEFHQFITHEKKKLETVYEHSEQFYKRVHQAVTSLRKNNLSSDDDFIKKLAEELTDCSFRIYMCDEEGDQLTGNVFKQDGEWIYQPEYAEKNWSWRPYFLENIMRMRNLRKGFFSDLYSDLETGEMIRTFSYPMDDQMYLFIDLPYSYLYEQDGLI.

The 250-residue stretch at 1–250 folds into the EAL domain; it reads MLDPLDILTN…LERDVLKQRL (250 aa).

This is an uncharacterized protein from Bacillus subtilis (strain 168).